The following is a 72-amino-acid chain: Sperm protein associated with the nucleus on the X chromosome N1 (72 aa).

Positions methionine 1–leucine 40 are disordered. Residues glycine 10–valine 35 are compositionally biased toward basic and acidic residues.

This sequence belongs to the SPAN-X family.

The chain is Sperm protein associated with the nucleus on the X chromosome N1 (SPANXN1) from Pan troglodytes (Chimpanzee).